The chain runs to 351 residues: Flap endonuclease 1 (351 aa).

An N-domain region spans residues 1–98; it reads MDLAELVEEI…QELERRKKVK (98 aa). Mg(2+) is bound by residues D27, D80, E154, E156, D175, D177, and D238. Residues 118-260 form an I-domain region; that stretch reads ELKKYAQMSI…TAYRIIKKYG (143 aa). Residues 343–351 are interaction with PCNA; that stretch reads RQTGLDQWF.

The protein belongs to the XPG/RAD2 endonuclease family. FEN1 subfamily. As to quaternary structure, interacts with PCNA. PCNA stimulates the nuclease activity without altering cleavage specificity. The cofactor is Mg(2+).

In terms of biological role, structure-specific nuclease with 5'-flap endonuclease and 5'-3' exonuclease activities involved in DNA replication and repair. During DNA replication, cleaves the 5'-overhanging flap structure that is generated by displacement synthesis when DNA polymerase encounters the 5'-end of a downstream Okazaki fragment. Binds the unpaired 3'-DNA end and kinks the DNA to facilitate 5' cleavage specificity. Cleaves one nucleotide into the double-stranded DNA from the junction in flap DNA, leaving a nick for ligation. Also involved in the base excision repair (BER) pathway. Acts as a genome stabilization factor that prevents flaps from equilibrating into structures that lead to duplications and deletions. Also possesses 5'-3' exonuclease activity on nicked or gapped double-stranded DNA. The chain is Flap endonuclease 1 from Sulfurisphaera tokodaii (strain DSM 16993 / JCM 10545 / NBRC 100140 / 7) (Sulfolobus tokodaii).